We begin with the raw amino-acid sequence, 489 residues long: 5'-AMP-activated protein kinase subunit gamma-3 (489 aa).

Residues Met1 to Ala95 form a disordered region. The segment covering Gly32 to Arg47 has biased composition (polar residues). CBS domains are found at residues Met197 to Leu258, Cys280 to Arg340, and Thr355 to Met415. ADP is bound by residues Arg225, Met240 to Asp245, Val285, His306 to Arg307, and Lys325. Residues Arg225, Met240–Asp245, Val285, His306, His306–Arg307, Lys325, Thr355, Ala360, Ser381–Ala382, Ser397–Asp400, Arg424, Leu432, His453, His453–Arg454, and Ser469–Asp472 each bind AMP. ATP contacts are provided by residues Arg225, Met240–Asp245, Val285, His306–Arg307, Arg307, and Lys325. The short motif at Leu293–Val314 is the AMPK pseudosubstrate element. ADP contacts are provided by residues Ser397 to Asp400, Arg424, Leu432, and His453 to Arg454. Residues Ser397–Asp400, Arg424, Leu432, and His453–Arg454 contribute to the ATP site. Positions Cys427–Ala486 constitute a CBS 4 domain.

Belongs to the 5'-AMP-activated protein kinase gamma subunit family. AMPK is a heterotrimer of an alpha catalytic subunit (PRKAA1 or PRKAA2), a beta (PRKAB1 or PRKAB2) and a gamma non-catalytic subunits (PRKAG1, PRKAG2 or PRKAG3). Interacts with FNIP1 and FNIP2. In terms of processing, phosphorylated by ULK1; leading to negatively regulate AMPK activity and suggesting the existence of a regulatory feedback loop between ULK1 and AMPK. Glycosylated; O-GlcNAcylated by OGT, promoting the AMP-activated protein kinase (AMPK) activity.

In terms of biological role, AMP/ATP-binding subunit of AMP-activated protein kinase (AMPK), an energy sensor protein kinase that plays a key role in regulating cellular energy metabolism. In response to reduction of intracellular ATP levels, AMPK activates energy-producing pathways and inhibits energy-consuming processes: inhibits protein, carbohydrate and lipid biosynthesis, as well as cell growth and proliferation. AMPK acts via direct phosphorylation of metabolic enzymes, and by longer-term effects via phosphorylation of transcription regulators. AMPK also acts as a regulator of cellular polarity by remodeling the actin cytoskeleton; probably by indirectly activating myosin. The AMPK gamma3 subunit is a non-catalytic subunit with a regulatory role in muscle energy metabolism. It mediates binding to AMP, ADP and ATP, leading to AMPK activation or inhibition: AMP-binding results in allosteric activation of alpha catalytic subunit (PRKAA1 or PRKAA2) both by inducing phosphorylation and preventing dephosphorylation of catalytic subunits. ADP also stimulates phosphorylation, without stimulating already phosphorylated catalytic subunit. ATP promotes dephosphorylation of catalytic subunit, rendering the AMPK enzyme inactive. The sequence is that of 5'-AMP-activated protein kinase subunit gamma-3 (Prkag3) from Mus musculus (Mouse).